The sequence spans 500 residues: Na(+)/H(+) antiporter NhaB (500 aa).

13 helical membrane passes run 11–31 (HGFL…FLVL), 34–54 (LLLA…EFIF), 58–78 (MALK…ALLL), 96–116 (VILL…LLLF), 121–141 (ILLG…LSAF), 145–165 (FLDA…FYAV), 205–225 (LLMH…VGEP), 241–261 (FLLK…LTCV), 311–331 (ILII…LMVI), 350–370 (FQDA…VAVI), 394–414 (MLYL…VATI), 450–470 (ATPN…APLI), and 477–497 (MVWM…WAVT).

This sequence belongs to the NhaB Na(+)/H(+) (TC 2.A.34) antiporter family.

Its subcellular location is the cell inner membrane. The enzyme catalyses 2 Na(+)(in) + 3 H(+)(out) = 2 Na(+)(out) + 3 H(+)(in). Its function is as follows. Na(+)/H(+) antiporter that extrudes sodium in exchange for external protons. This is Na(+)/H(+) antiporter NhaB from Pseudomonas putida (strain ATCC 700007 / DSM 6899 / JCM 31910 / BCRC 17059 / LMG 24140 / F1).